Consider the following 80-residue polypeptide: Large ribosomal subunit protein bL31B (80 aa).

The protein belongs to the bacterial ribosomal protein bL31 family. Type B subfamily. As to quaternary structure, part of the 50S ribosomal subunit.

This Xanthomonas campestris pv. campestris (strain 8004) protein is Large ribosomal subunit protein bL31B.